The sequence spans 132 residues: MKKTALLNIALSRTIAGLGHGDILVIGDAGLPVPPGVELIDLALTPGIPDFASVLRAVLSEMQVERHVLAEEMQKVVPPGLVEIERLRGKLGKREWLSHEQFKVLSRSARAVVRTGECQPYSNIALIAGVTF.

His-20 functions as the Proton donor in the catalytic mechanism. Substrate contacts are provided by residues Asp-28, His-99, and 121-123 (YSN).

It belongs to the RbsD / FucU family. RbsD subfamily. As to quaternary structure, homodecamer.

It is found in the cytoplasm. The enzyme catalyses beta-D-ribopyranose = beta-D-ribofuranose. It functions in the pathway carbohydrate metabolism; D-ribose degradation; D-ribose 5-phosphate from beta-D-ribopyranose: step 1/2. Functionally, catalyzes the interconversion of beta-pyran and beta-furan forms of D-ribose. This chain is D-ribose pyranase, found in Pseudomonas putida (strain W619).